We begin with the raw amino-acid sequence, 425 residues long: Dihydroorotase (425 aa).

Residues histidine 61 and histidine 63 each coordinate Zn(2+). Residues 63-65 (HLR) and asparagine 95 contribute to the substrate site. Positions 153, 180, and 233 each coordinate Zn(2+). Position 279 (asparagine 279) interacts with substrate. Aspartate 306 provides a ligand contact to Zn(2+). Aspartate 306 is an active-site residue. Histidine 310 lines the substrate pocket.

The protein belongs to the metallo-dependent hydrolases superfamily. DHOase family. Class I DHOase subfamily. The cofactor is Zn(2+).

It carries out the reaction (S)-dihydroorotate + H2O = N-carbamoyl-L-aspartate + H(+). Its pathway is pyrimidine metabolism; UMP biosynthesis via de novo pathway; (S)-dihydroorotate from bicarbonate: step 3/3. In terms of biological role, catalyzes the reversible cyclization of carbamoyl aspartate to dihydroorotate. The chain is Dihydroorotase from Geobacter sulfurreducens (strain ATCC 51573 / DSM 12127 / PCA).